Reading from the N-terminus, the 242-residue chain is DNA repair protein RecO (242 aa).

This sequence belongs to the RecO family. Monomer.

In terms of biological role, involved in DNA repair and RecF pathway recombination. This Salmonella enteritidis PT4 (strain P125109) protein is DNA repair protein RecO.